The primary structure comprises 507 residues: Cytochrome P450 7B1 (507 aa).

Transmembrane regions (helical) follow at residues 14 to 34 (PLAL…LFLL), 178 to 198 (IFAF…YGKI), and 287 to 307 (FLWA…YYIL). A heme-binding site is contributed by C447.

It belongs to the cytochrome P450 family. Heme is required as a cofactor. In terms of tissue distribution, highly expressed in brain structures including the corpus callosum, the anterior commissure and fornix. The hippocampal expression is particularly prominent in the dentate gyrus. Expressed in liver and kidney. The hepatic expression is sexually dimorphic, predominantly detected in male liver while barely detectable in females. Expressed in lymph nodes and spleens, in both lymphoid and stromal compartments. Higher expression is detected in fibroblastic reticular cells, a type of stromal cells in the lymph nodes. Also expressed at high levels in the outer follicle and at the B cell-T cell boundary of splenic germinal centers. Expressed in dendritic cells (DCs) subpopulations being most abundant in CD8-positive DCs.

Its subcellular location is the endoplasmic reticulum membrane. The protein resides in the microsome membrane. The enzyme catalyses 25-hydroxycholesterol + reduced [NADPH--hemoprotein reductase] + O2 = 7alpha,25-dihydroxycholesterol + oxidized [NADPH--hemoprotein reductase] + H2O + H(+). It carries out the reaction (25R)-cholest-5-ene-3beta,26-diol + reduced [NADPH--hemoprotein reductase] + O2 = (25R)-cholest-5-en-3beta,7alpha,26-triol + oxidized [NADPH--hemoprotein reductase] + H2O + H(+). It catalyses the reaction (24S)-hydroxycholesterol + reduced [NADPH--hemoprotein reductase] + O2 = (24S)-7alpha-dihydroxycholesterol + oxidized [NADPH--hemoprotein reductase] + H2O + H(+). The catalysed reaction is (24S)-25-epoxycholesterol + reduced [NADPH--hemoprotein reductase] + O2 = (24S,25)-epoxy-7alpha-hydroxycholesterol + oxidized [NADPH--hemoprotein reductase] + H2O + H(+). The enzyme catalyses (22R)-hydroxycholesterol + reduced [NADPH--hemoprotein reductase] + O2 = (22R,7alpha)-dihydroxycholesterol + oxidized [NADPH--hemoprotein reductase] + H2O + H(+). It carries out the reaction androst-5-en-3beta,17beta-diol + reduced [NADPH--hemoprotein reductase] + O2 = androst-5-en-3beta,7alpha,17beta-triol + oxidized [NADPH--hemoprotein reductase] + H2O + H(+). It catalyses the reaction 5alpha-androstane-3beta,17beta-diol + reduced [NADPH--hemoprotein reductase] + O2 = 5alpha-androstane-3beta,6alpha,17beta-triol + oxidized [NADPH--hemoprotein reductase] + H2O + H(+). The catalysed reaction is 3beta-hydroxyandrost-5-en-17-one + reduced [NADPH--hemoprotein reductase] + O2 = 3beta,7alpha-dihydroxyandrost-5-en-17-one + oxidized [NADPH--hemoprotein reductase] + H2O + H(+). The enzyme catalyses 3beta-hydroxy-5alpha-androstan-17-one + reduced [NADPH--hemoprotein reductase] + O2 = 3beta,7alpha-dihydroxy-5alpha-androstan-17-one + oxidized [NADPH--hemoprotein reductase] + H2O + H(+). It carries out the reaction pregnenolone + reduced [NADPH--hemoprotein reductase] + O2 = 7alpha-hydroxypregnenolone + oxidized [NADPH--hemoprotein reductase] + H2O + H(+). It functions in the pathway lipid metabolism; bile acid biosynthesis. Its pathway is steroid hormone biosynthesis. With respect to regulation, inhibited by drugs voriconazole and metyrapone. Functionally, a cytochrome P450 monooxygenase involved in the metabolism of endogenous oxysterols and steroid hormones, including neurosteroids. Mechanistically, uses molecular oxygen inserting one oxygen atom into a substrate, and reducing the second into a water molecule, with two electrons provided by NADPH via cytochrome P450 reductase (CPR; NADPH-ferrihemoprotein reductase). Catalyzes the hydroxylation of carbon hydrogen bonds of steroids with a preference for 7-alpha position. Usually metabolizes steroids carrying a hydroxy group at position 3, functioning as a 3-hydroxy steroid 7-alpha hydroxylase. Hydroxylates oxysterols, including 25-hydroxycholesterol and (25R)-cholest-5-ene-3beta,26-diol toward 7-alpha hydroxy derivatives, which may be transported to the liver and converted to bile acids. Via its product 7-alpha,25-dihydroxycholesterol, a ligand for the chemotactic G protein-coupled receptor GPR183/EBI2, regulates B cell migration in germinal centers of lymphoid organs, thus guiding efficient maturation of plasma B cells and overall antigen-specific humoral immune response. 7-alpha hydroxylates neurosteroids, including 3beta-hydroxyandrost-5-en-17-one (dehydroepiandrosterone) and pregnenolone, both involved in hippocampus-associated memory and learning. Metabolizes androstanoids toward 6- or 7-alpha hydroxy derivatives. This is Cytochrome P450 7B1 from Mus musculus (Mouse).